Here is a 326-residue protein sequence, read N- to C-terminus: tRNA-modifying protein YgfZ (326 aa).

Folate is bound by residues Trp27 and Trp189.

This sequence belongs to the tRNA-modifying YgfZ family.

It is found in the cytoplasm. Functionally, folate-binding protein involved in regulating the level of ATP-DnaA and in the modification of some tRNAs. It is probably a key factor in regulatory networks that act via tRNA modification, such as initiation of chromosomal replication. The sequence is that of tRNA-modifying protein YgfZ from Escherichia coli O6:K15:H31 (strain 536 / UPEC).